A 370-amino-acid chain; its full sequence is Phospho-N-acetylmuramoyl-pentapeptide-transferase (370 aa).

Helical transmembrane passes span Ala-29–Leu-49, Gly-70–Trp-90, Leu-93–Phe-113, Lys-133–Gly-153, Gly-177–Ser-197, Gly-209–Ser-229, Val-251–Ala-271, Val-273–Met-293, Ile-298–Val-318, and Val-349–Ile-369.

Belongs to the glycosyltransferase 4 family. MraY subfamily. Requires Mg(2+) as cofactor.

The protein localises to the cell inner membrane. It carries out the reaction UDP-N-acetyl-alpha-D-muramoyl-L-alanyl-gamma-D-glutamyl-meso-2,6-diaminopimeloyl-D-alanyl-D-alanine + di-trans,octa-cis-undecaprenyl phosphate = di-trans,octa-cis-undecaprenyl diphospho-N-acetyl-alpha-D-muramoyl-L-alanyl-D-glutamyl-meso-2,6-diaminopimeloyl-D-alanyl-D-alanine + UMP. The protein operates within cell wall biogenesis; peptidoglycan biosynthesis. Functionally, catalyzes the initial step of the lipid cycle reactions in the biosynthesis of the cell wall peptidoglycan: transfers peptidoglycan precursor phospho-MurNAc-pentapeptide from UDP-MurNAc-pentapeptide onto the lipid carrier undecaprenyl phosphate, yielding undecaprenyl-pyrophosphoryl-MurNAc-pentapeptide, known as lipid I. This is Phospho-N-acetylmuramoyl-pentapeptide-transferase from Leptospira biflexa serovar Patoc (strain Patoc 1 / Ames).